A 947-amino-acid polypeptide reads, in one-letter code: Protein RRC1-like (947 aa).

Residues 1–11 (MVKDEFFLDHP) show a composition bias toward basic and acidic residues. Disordered stretches follow at residues 1 to 35 (MVKD…RMKQ) and 63 to 167 (PNDN…DELP). Residues 12–34 (GRKHRSRNTEKKKKPRRRERRMK) are compositionally biased toward basic residues. 2 stretches are compositionally biased toward basic and acidic residues: residues 66-84 (NKLK…DSIS) and 104-155 (KGPE…DHNS). Positions 187–268 (TNLYVVNLSS…YELKIGWGKV (82 aa)) constitute an RRM domain. The SURP motif repeat unit spans residues 336 to 379 (IIDTMALNVLDGGCAFEQAIMERGRGNPLFNFLFELGSKEHTYY). The interval 412-434 (PPLPATRSPEHGKESRGTYAAGK) is disordered. A CID domain is found at 444–589 (LTDSQRDEFE…GLRATFLRSR (146 aa)). Positions 638–672 (LMNRPISELERRCRHNGLSLLGGREMMVARLVCLK) constitute an SAP domain. Disordered stretches follow at residues 752 to 797 (REDD…PENE) and 846 to 947 (GLSG…RGMR). Basic and acidic residues-rich tracts occupy residues 854–876 (LPEK…RSES), 888–916 (LTRE…LDKD), and 924–947 (SSRE…RGMR).

As to expression, expressed in leaves, inflorescence stems, roots, flower buds, open flowers and siliques.

Probable SR-like splicing factor. The protein is Protein RRC1-like of Arabidopsis thaliana (Mouse-ear cress).